We begin with the raw amino-acid sequence, 80 residues long: RNA-binding protein KhpA (80 aa).

The KH domain occupies 33–80 (LEILQLRVASEDVGKVIGKHGRIARALRTLLSASAHASQTRYALEIID).

Belongs to the KhpA RNA-binding protein family. As to quaternary structure, forms a complex with KhpB.

It localises to the cytoplasm. Its function is as follows. A probable RNA chaperone. Forms a complex with KhpB which binds to cellular RNA and controls its expression. Plays a role in peptidoglycan (PG) homeostasis and cell length regulation. This is RNA-binding protein KhpA from Treponema pallidum (strain Nichols).